Consider the following 779-residue polypeptide: Probable glutamine--tRNA ligase (779 aa).

Residues 268 to 270 (EPN) and 274 to 280 (HIGHAKA) each bind ATP. Residues aspartate 300 and tyrosine 440 each coordinate L-glutamine. ATP is bound by residues threonine 459, 488–489 (RL), and 496–498 (LSK).

It belongs to the class-I aminoacyl-tRNA synthetase family.

It carries out the reaction tRNA(Gln) + L-glutamine + ATP = L-glutaminyl-tRNA(Gln) + AMP + diphosphate. The chain is Probable glutamine--tRNA ligase (glnS) from Dictyostelium discoideum (Social amoeba).